Reading from the N-terminus, the 979-residue chain is Receptor-type tyrosine-protein phosphatase-like N (979 aa).

The first 34 residues, 1–34, serve as a signal peptide directing secretion; sequence MRRPRRPGGLGGSGGLRLLLCLLLLSSRPGGCSA. An RESP18 homology domain region spans residues 35 to 131; the sequence is VSAHGCLFDR…RPRDRSGLAP (97 aa). The Lumenal segment spans residues 35–575; sequence VSAHGCLFDR…QTAHSTSPMR (541 aa). A disulfide bridge links cysteine 53 with cysteine 62. 2 stretches are compositionally biased toward basic and acidic residues: residues 112–127 and 304–323; these read RIPRLRPPEPRPRDRS and RAEDSPEGYEKEGLGDRGEK. Disordered stretches follow at residues 112 to 173, 289 to 329, and 393 to 439; these read RIPR…SSSL, SRAR…SPAV, and VEGR…ARPP. Serine 308 is modified (phosphoserine). Residues 415–433 are compositionally biased toward low complexity; that stretch reads SPTSSEVQQVPSPVSSEPP. Residue threonine 441 is glycosylated (O-linked (GalNAc...) threonine). Residues 449–575 form a sufficient for dimerization of proICA512 region; the sequence is SPLGQSQPTV…QTAHSTSPMR (127 aa). Asparagine 506 and asparagine 524 each carry an N-linked (GlcNAc...) asparagine glycan. Residues 576 to 600 form a helical membrane-spanning segment; that stretch reads SVLLTLVALAGVAGLLVALAVALCV. The tract at residues 601 to 732 is sufficient for dimerization of proICA512; sequence RQHARQQDKE…PNTCATAQGE (132 aa). The Cytoplasmic portion of the chain corresponds to 601–979; sequence RQHARQQDKE…VNAILKALPQ (379 aa). Residues 643-680 form a disordered region; the sequence is NRAEGPPEPSRVSSVSSQFSDAAQASPSSHSSTPSWCE. A compositionally biased stretch (low complexity) spans 652–677; sequence SRVSSVSSQFSDAAQASPSSHSSTPS. The Tyrosine-protein phosphatase domain occupies 709 to 969; it reads LAKEWQALCA…EFALTAVAEE (261 aa). Residue lysine 754 forms a Glycyl lysine isopeptide (Lys-Gly) (interchain with G-Cter in SUMO) linkage.

This sequence belongs to the protein-tyrosine phosphatase family. Receptor class 8 subfamily. Homodimer; shown for the unprocessed protein (proICA512) in the endoplasmic reticulum and resolved during protein maturation as ICA512-TMF seems to be predominantly monomeric in secretory granules; however, ICA512-CCF interacts with ICA512-TMF disrupting the ICA512-TMF:SNTB2 complex. The isolated lumenal RESP18 homology domain has been shown to form disulfide-linked homooligomers. Interacts (via cytoplasmic domain) with phosphorylated SNTB2; this protects PTPRN against cleavage by CAPN1 to produce ICA512-CCF. Dephosphorylation of SNTB2 upon insulin stimulation disrupts the interaction and results in PTPRN cleavage. Interacts with SNX19. ICA512-CCF interacts with PIAS4; in the nucleus. Interacts with STAT5B (phosphorylated); down-regulated by ICA512-CCF sumoylation; ICA512-CCF prevents STAT5B dephosphorylation; ICA512-CCF mediates interaction of STAT5B with PIAS4. Interacts (via RESP18 homology domain) with insulin and proinsulin. Interacts with PTPRN2, PTPRA and PTPRE. N-glycosylated. Post-translationally, O-glycosylated with core 1 or possibly core 8 glycans. In terms of processing, subject to proteolytic cleavage at multiple sites. Subject to cleavage on a pair of basic residues. On exocytosis of secretory granules in pancreatic beta-cells ICA512-TMF is transiently inserted in the plasma-membrane and cleaved by mu-type calpain CPN1 to yield ICA512-CCF. Sumoylated at two sites including Lys-754. Sumoylation decreases interaction with STAT5. As to expression, expression is restricted to neuroendocrine cells. Found in pancreas, brain and pituitary.

It is found in the membrane. It localises to the cytoplasmic vesicle. The protein resides in the secretory vesicle membrane. The protein localises to the perikaryon. Its subcellular location is the cell projection. It is found in the axon. It localises to the synapse. The protein resides in the cell membrane. The protein localises to the endosome. Its subcellular location is the nucleus. Functionally, plays a role in vesicle-mediated secretory processes. Required for normal accumulation of secretory vesicles in hippocampus, pituitary and pancreatic islets. Required for the accumulation of normal levels of insulin-containing vesicles and preventing their degradation. Plays a role in insulin secretion in response to glucose stimuli. Required for normal accumulation of the neurotransmitters norepinephrine, dopamine and serotonin in the brain. In females, but not in males, required for normal accumulation and secretion of pituitary hormones, such as luteinizing hormone (LH) and follicle-stimulating hormone (FSH). Required to maintain normal levels of renin expression and renin release. Seems to lack intrinsic enzyme activity. May regulate catalytic active protein-tyrosine phosphatases such as PTPRA through dimerization. In terms of biological role, ICA512-TMF regulates dynamics and exocytosis of insulin secretory granules (SGs); binding of ICA512-TMF to SNTB2/beta-2-syntrophin is proposed to restrain SGs mobility and exocytosis by tethering them to the actin cytoskeleton depending on UTRN; the function is inhibited by cytoplasmic ICA512-CFF dimerizing with ICA512-TMF and displacing SNTB2. ICA512-CCF translocated to the nucleus promotes expression of insulin and other granule-related genes; the function implicates binding to and regulating activity of STAT5B probably by preventing its dephosphorylation and potentially by inducing its sumoylation by recruiting PIAS4. Enhances pancreatic beta-cell proliferation by converging with signaling by STAT5B and STAT3. ICA512-CCF located in the cytoplasm regulates dynamics and exocytosis of insulin secretory granules (SGs) by dimerizing with ICA512-TMF and displacing SNTB2 thus enhancing SGs mobility and exocytosis. In Homo sapiens (Human), this protein is Receptor-type tyrosine-protein phosphatase-like N (PTPRN).